Here is a 155-residue protein sequence, read N- to C-terminus: 3-dehydroquinate dehydratase 1 (155 aa).

The active-site Proton acceptor is Tyr-28. Substrate-binding residues include Asn-80, His-86, and Asp-93. The active-site Proton donor is the His-106. Residues 107–108 and Arg-117 each bind substrate; that span reads VT.

It belongs to the type-II 3-dehydroquinase family. As to quaternary structure, homododecamer.

The catalysed reaction is 3-dehydroquinate = 3-dehydroshikimate + H2O. It functions in the pathway metabolic intermediate biosynthesis; chorismate biosynthesis; chorismate from D-erythrose 4-phosphate and phosphoenolpyruvate: step 3/7. Its function is as follows. Catalyzes a trans-dehydration via an enolate intermediate. The polypeptide is 3-dehydroquinate dehydratase 1 (aroQ1) (Bradyrhizobium diazoefficiens (strain JCM 10833 / BCRC 13528 / IAM 13628 / NBRC 14792 / USDA 110)).